Reading from the N-terminus, the 349-residue chain is Galanin receptor type 1 (349 aa).

Over 1–36 the chain is Extracellular; that stretch reads MELAVGNLSEGNASWPEPPAPEPGPLFGIGVENFVT. Asn-7 and Asn-12 each carry an N-linked (GlcNAc...) asparagine glycan. A helical membrane pass occupies residues 37-57; that stretch reads LVVFGLIFALGVLGNSLVITV. Residues 58–70 are Cytoplasmic-facing; it reads LARSKPGKPRSTT. A helical transmembrane segment spans residues 71–91; the sequence is NLFILNLSIADLAYLLFCIPF. Topologically, residues 92-109 are extracellular; the sequence is QATVYALPTWVLGAFICK. Cys-108 and Cys-187 are disulfide-bonded. Residues 110–131 traverse the membrane as a helical segment; it reads FIHYFFTVSMLVSIFTLAAMSV. Over 132–151 the chain is Cytoplasmic; that stretch reads DRYVAIVHSRRSSSLRVSRN. Residues 152 to 172 form a helical membrane-spanning segment; sequence ALLGVGCIWALSIAMASPVAY. The Extracellular portion of the chain corresponds to 173–200; that stretch reads HQGLFHPRASNQTFCWEQWPDPRHKKAY. Asn-183 is a glycosylation site (N-linked (GlcNAc...) asparagine). Residues 201 to 221 form a helical membrane-spanning segment; that stretch reads VVCTFVFGYLLPLLLICFCYA. At 222 to 248 the chain is on the cytoplasmic side; sequence KVLNHLHKKLKNMSKKSEASKKKTAQT. The helical transmembrane segment at 249-269 threads the bilayer; sequence VLVVVVVFGISWLPHHIIHLW. At 270–271 the chain is on the extracellular side; that stretch reads AE. Residues 272–292 traverse the membrane as a helical segment; that stretch reads FGVFPLTPASFLFRITAHCLA. The Cytoplasmic segment spans residues 293-349; sequence YSNSSVNPIIYAFLSENFRKAYKQVFKCHIRKDSHLSDTKESKSRIDTPPSTNCTHV. A lipid anchor (S-palmitoyl cysteine) is attached at Cys-320.

This sequence belongs to the G-protein coupled receptor 1 family. As to quaternary structure, interacts with GRP39 AND HTR1A. Palmitoylated on at least one of the three cysteine residues present in the C-terminal part.

Its subcellular location is the cell membrane. Functionally, receptor for the hormone galanin. The activity of this receptor is mediated by G proteins that inhibit adenylate cyclase activity. The sequence is that of Galanin receptor type 1 (GALR1) from Homo sapiens (Human).